Consider the following 975-residue polypeptide: GPI inositol-deacylase (975 aa).

A helical membrane pass occupies residues 27-47; it reads STLVIIVGLLLLCIITSTHIS. The N-linked (GlcNAc...) asparagine glycan is linked to Asn49. Residue Ser210 is part of the active site. Asn276, Asn384, Asn407, Asn419, and Asn488 each carry an N-linked (GlcNAc...) asparagine glycan. A helical membrane pass occupies residues 655–675; it reads LAFASIPISIIALVLCYQFYY. The N-linked (GlcNAc...) asparagine glycan is linked to Asn696. 3 helical membrane passes run 699-719, 751-771, and 818-838; these read LLIF…AILT, FVWW…FIIL, and VCFI…FILV. Asn867 carries an N-linked (GlcNAc...) asparagine glycan. The next 3 membrane-spanning stretches (helical) occupy residues 868–888, 932–952, and 955–975; these read VSFL…VVVF, NWLI…MYGI, and LYWV…LTIL.

It belongs to the GPI inositol-deacylase family.

It localises to the endoplasmic reticulum membrane. Functionally, involved in inositol deacylation of GPI-anchored proteins which plays important roles in the quality control and ER-associated degradation of GPI-anchored proteins. The polypeptide is GPI inositol-deacylase (BST1) (Kluyveromyces lactis (strain ATCC 8585 / CBS 2359 / DSM 70799 / NBRC 1267 / NRRL Y-1140 / WM37) (Yeast)).